A 485-amino-acid polypeptide reads, in one-letter code: Glutamyl-tRNA(Gln) amidotransferase subunit A (485 aa).

Active-site charge relay system residues include K79 and S154. S178 functions as the Acyl-ester intermediate in the catalytic mechanism.

The protein belongs to the amidase family. GatA subfamily. As to quaternary structure, heterotrimer of A, B and C subunits.

It catalyses the reaction L-glutamyl-tRNA(Gln) + L-glutamine + ATP + H2O = L-glutaminyl-tRNA(Gln) + L-glutamate + ADP + phosphate + H(+). Its function is as follows. Allows the formation of correctly charged Gln-tRNA(Gln) through the transamidation of misacylated Glu-tRNA(Gln) in organisms which lack glutaminyl-tRNA synthetase. The reaction takes place in the presence of glutamine and ATP through an activated gamma-phospho-Glu-tRNA(Gln). The chain is Glutamyl-tRNA(Gln) amidotransferase subunit A from Clostridium botulinum (strain Okra / Type B1).